The following is a 429-amino-acid chain: Argininosuccinate lyase (429 aa).

The protein belongs to the lyase 1 family. Argininosuccinate lyase subfamily.

It is found in the cytoplasm. It carries out the reaction 2-(N(omega)-L-arginino)succinate = fumarate + L-arginine. Its pathway is amino-acid biosynthesis; L-arginine biosynthesis; L-arginine from L-ornithine and carbamoyl phosphate: step 3/3. The chain is Argininosuccinate lyase from Pyrobaculum aerophilum (strain ATCC 51768 / DSM 7523 / JCM 9630 / CIP 104966 / NBRC 100827 / IM2).